A 300-amino-acid polypeptide reads, in one-letter code: Small ribosomal subunit protein uS2 (300 aa).

The disordered stretch occupies residues 269 to 300; sequence WEADGADWAASSAAAPAESWAAEAQGAEGAKW.

Belongs to the universal ribosomal protein uS2 family. As to quaternary structure, component of the small ribosomal subunit. Mature ribosomes consist of a small (40S) and a large (60S) subunit. The 40S subunit contains about 33 different proteins and 1 molecule of RNA (18S). The 60S subunit contains about 49 different proteins and 3 molecules of RNA (25S, 5.8S and 5S). Interacts with rps21.

It is found in the cytoplasm. Functionally, required for the assembly and/or stability of the 40S ribosomal subunit. Required for the processing of the 20S rRNA-precursor to mature 18S rRNA in a late step of the maturation of 40S ribosomal subunits. The chain is Small ribosomal subunit protein uS2 (rps0) from Aspergillus terreus (strain NIH 2624 / FGSC A1156).